The chain runs to 124 residues: Small ribosomal subunit protein uS12 (124 aa).

Residues 1–24 (MPTINQLVRQGRKKSVKKTNTPAL) are disordered. Asp-89 carries the 3-methylthioaspartic acid modification.

This sequence belongs to the universal ribosomal protein uS12 family. As to quaternary structure, part of the 30S ribosomal subunit. Contacts proteins S8 and S17. May interact with IF1 in the 30S initiation complex.

With S4 and S5 plays an important role in translational accuracy. In terms of biological role, interacts with and stabilizes bases of the 16S rRNA that are involved in tRNA selection in the A site and with the mRNA backbone. Located at the interface of the 30S and 50S subunits, it traverses the body of the 30S subunit contacting proteins on the other side and probably holding the rRNA structure together. The combined cluster of proteins S8, S12 and S17 appears to hold together the shoulder and platform of the 30S subunit. This is Small ribosomal subunit protein uS12 from Desulfotalea psychrophila (strain LSv54 / DSM 12343).